The sequence spans 450 residues: Akuammiline synthase 2 (450 aa).

Catalysis depends on His154, which acts as the Proton acceptor. A Nuclear localization signal motif is present at residues 218 to 225 (MRRFVFDA). Catalysis depends on Asp376, which acts as the Proton acceptor.

This sequence belongs to the plant acyltransferase family. Monomer.

It localises to the cytoplasm. The protein resides in the nucleus. The catalysed reaction is rhazimol + acetyl-CoA = akuammiline + CoA + H(+). Its pathway is alkaloid biosynthesis. Acyltransferase involved in the biosynthesis of akuammilan monoterpene indole alkaloids (MIAs) natural products, components with various biological properties such as antidiabetic, antibacterial, anti-inflammatory, anticancer, and antimalarial activities. Catalyzes the conversion of rhazimol to akuammiline. The sequence is that of Akuammiline synthase 2 from Alstonia scholaris (Dogbane).